Reading from the N-terminus, the 192-residue chain is Putative inactive ribonuclease 11 (192 aa).

A signal peptide spans 1–15 (MAVFLLLLALGLLLA). Positions 21 to 54 (RMKGTTEQFSQEEMQPAAKQTLEESANSTLSDKN) are disordered. Positions 43-54 (EESANSTLSDKN) are enriched in polar residues. N-linked (GlcNAc...) asparagine glycans are attached at residues Asn47 and Asn104.

It belongs to the pancreatic ribonuclease family.

The protein localises to the secreted. This Mus musculus (Mouse) protein is Putative inactive ribonuclease 11 (Rnase11).